Reading from the N-terminus, the 164-residue chain is MKRHSENKKSGPVGPSQRQLRAGELIRHALVDILREEDLVDPALAGISVTISEVRMSADLKHAICFVEPLGASIAPQVEREPSSPSRTVVVPGSPAEVVAGLTRLTKFLRGKLAKTIDMKFTPELKFLHDETFNSATYMDRLFEDPRVQQDVRRLSDVAEDEEG.

It belongs to the RbfA family. Monomer. Binds 30S ribosomal subunits, but not 50S ribosomal subunits or 70S ribosomes.

The protein localises to the cytoplasm. One of several proteins that assist in the late maturation steps of the functional core of the 30S ribosomal subunit. Associates with free 30S ribosomal subunits (but not with 30S subunits that are part of 70S ribosomes or polysomes). Required for efficient processing of 16S rRNA. May interact with the 5'-terminal helix region of 16S rRNA. This chain is Ribosome-binding factor A, found in Caulobacter sp. (strain K31).